Reading from the N-terminus, the 154-residue chain is Myoglobin (154 aa).

The region spanning Gly-2–Lys-148 is the Globin domain. The residue at position 4 (Ser-4) is a Phosphoserine. His-65 is a binding site for nitrite. Position 65 (His-65) interacts with O2. Thr-68 bears the Phosphothreonine mark. Heme b is bound at residue His-94.

It belongs to the globin family. Monomeric.

It localises to the cytoplasm. The protein localises to the sarcoplasm. It catalyses the reaction Fe(III)-heme b-[protein] + nitric oxide + H2O = Fe(II)-heme b-[protein] + nitrite + 2 H(+). The catalysed reaction is H2O2 + AH2 = A + 2 H2O. Its function is as follows. Monomeric heme protein which primary function is to store oxygen and facilitate its diffusion within muscle tissues. Reversibly binds oxygen through a pentacoordinated heme iron and enables its timely and efficient release as needed during periods of heightened demand. Depending on the oxidative conditions of tissues and cells, and in addition to its ability to bind oxygen, it also has a nitrite reductase activity whereby it regulates the production of bioactive nitric oxide. Under stress conditions, like hypoxia and anoxia, it also protects cells against reactive oxygen species thanks to its pseudoperoxidase activity. This Lagothrix lagotricha (Brown woolly monkey) protein is Myoglobin (MB).